The following is a 429-amino-acid chain: Enolase (429 aa).

Residue Gln-163 participates in (2R)-2-phosphoglycerate binding. Glu-205 serves as the catalytic Proton donor. Positions 242, 287, and 314 each coordinate Mg(2+). Lys-339, Arg-368, Ser-369, and Lys-390 together coordinate (2R)-2-phosphoglycerate. Lys-339 functions as the Proton acceptor in the catalytic mechanism.

Belongs to the enolase family. Mg(2+) is required as a cofactor.

It localises to the cytoplasm. It is found in the secreted. The protein resides in the cell surface. It carries out the reaction (2R)-2-phosphoglycerate = phosphoenolpyruvate + H2O. It participates in carbohydrate degradation; glycolysis; pyruvate from D-glyceraldehyde 3-phosphate: step 4/5. Catalyzes the reversible conversion of 2-phosphoglycerate (2-PG) into phosphoenolpyruvate (PEP). It is essential for the degradation of carbohydrates via glycolysis. This chain is Enolase, found in Anaeromyxobacter dehalogenans (strain 2CP-C).